The chain runs to 134 residues: Probable dihydroneopterin aldolase (134 aa).

Residues glutamate 26, tyrosine 59, and 78–79 (IE) each bind substrate. Lysine 106 serves as the catalytic Proton donor/acceptor.

This sequence belongs to the DHNA family.

The enzyme catalyses 7,8-dihydroneopterin = 6-hydroxymethyl-7,8-dihydropterin + glycolaldehyde. It functions in the pathway cofactor biosynthesis; tetrahydrofolate biosynthesis; 2-amino-4-hydroxy-6-hydroxymethyl-7,8-dihydropteridine diphosphate from 7,8-dihydroneopterin triphosphate: step 3/4. Catalyzes the conversion of 7,8-dihydroneopterin to 6-hydroxymethyl-7,8-dihydropterin. This chain is Probable dihydroneopterin aldolase (folB), found in Chlamydia pneumoniae (Chlamydophila pneumoniae).